We begin with the raw amino-acid sequence, 116 residues long: Protein RALF-like 33 (116 aa).

The N-terminal stretch at 1–23 (MRGLSTKPVAIIIAILTVHFLFA) is a signal peptide. Residues 24-67 (AVTSQSSGDFVPIESKCNGTIAECSLSTAEEEFEMDSEINRRIL) constitute a propeptide, removed in mature form. Asn41 carries N-linked (GlcNAc...) asparagine glycosylation. Disulfide bonds link Cys85–Cys95 and Cys108–Cys114.

This sequence belongs to the plant rapid alkalinization factor (RALF) family. Proteolytically cleaved, probably by S1P, a subtilisin-like serine protease (subtilase). As to expression, expressed in roots, stems, leaves and plants.

Its subcellular location is the secreted. In terms of biological role, cell signaling peptide that may regulate plant stress, growth, and development. Mediates a rapid alkalinization of extracellular space by mediating a transient increase in the cytoplasmic Ca(2+) concentration leading to a calcium-dependent signaling events through a cell surface receptor and a concomitant activation of some intracellular mitogen-activated protein kinases. The chain is Protein RALF-like 33 (RALFL33) from Arabidopsis thaliana (Mouse-ear cress).